Reading from the N-terminus, the 243-residue chain is TIGR03089 family protein (243 aa).

It belongs to the TIGR03089 family.

The polypeptide is TIGR03089 family protein (Mycobacterium tuberculosis (strain ATCC 25618 / H37Rv)).